Consider the following 268-residue polypeptide: Putative type I specificity subunit S.MpnORF365P (268 aa).

Belongs to the type-I restriction system S methylase family. In terms of assembly, the methyltransferase is composed of M and S polypeptides.

In terms of biological role, the specificity (S) subunit of a type I methyltransferase (MTase); this subunit dictates DNA sequence specificity. The single R subunit has multiple frameshifts and is probably not expressed. The sequence is that of Putative type I specificity subunit S.MpnORF365P from Mycoplasma pneumoniae (strain ATCC 29342 / M129 / Subtype 1) (Mycoplasmoides pneumoniae).